A 732-amino-acid polypeptide reads, in one-letter code: Polyribonucleotide nucleotidyltransferase (732 aa).

Mg(2+) contacts are provided by aspartate 489 and aspartate 495. Residues 556 to 615 (PKIDTIQIDVDKIKIVIGKGGETIDKIIAETGVKIDIDEEGLVQIFSSDQAAIDRTKEII) enclose the KH domain. The 69-residue stretch at 625-693 (GEVYHAKVVR…DKGRVDASMK (69 aa)) folds into the S1 motif domain. The segment at 691 to 732 (SMKALIPRPPKPEKKEEKASEAKEASNDQASKSQSETASEEK) is disordered. Residues 700-716 (PKPEKKEEKASEAKEAS) show a composition bias toward basic and acidic residues. Residues 717–732 (NDQASKSQSETASEEK) show a composition bias toward polar residues.

The protein belongs to the polyribonucleotide nucleotidyltransferase family. Requires Mg(2+) as cofactor.

It is found in the cytoplasm. The catalysed reaction is RNA(n+1) + phosphate = RNA(n) + a ribonucleoside 5'-diphosphate. Its function is as follows. Involved in mRNA degradation. Catalyzes the phosphorolysis of single-stranded polyribonucleotides processively in the 3'- to 5'-direction. This is Polyribonucleotide nucleotidyltransferase from Streptococcus uberis (strain ATCC BAA-854 / 0140J).